Consider the following 303-residue polypeptide: Quinolinate synthase (303 aa).

Iminosuccinate-binding residues include His-23 and Ser-40. Cys-85 lines the [4Fe-4S] cluster pocket. Residues 111 to 113 and Ser-128 contribute to the iminosuccinate site; that span reads YVN. Cys-171 is a [4Fe-4S] cluster binding site. Iminosuccinate contacts are provided by residues 197-199 and Thr-214; that span reads HPE. [4Fe-4S] cluster is bound at residue Cys-259.

It belongs to the quinolinate synthase family. Type 2 subfamily. [4Fe-4S] cluster serves as cofactor.

It localises to the cytoplasm. The enzyme catalyses iminosuccinate + dihydroxyacetone phosphate = quinolinate + phosphate + 2 H2O + H(+). Its pathway is cofactor biosynthesis; NAD(+) biosynthesis; quinolinate from iminoaspartate: step 1/1. Functionally, catalyzes the condensation of iminoaspartate with dihydroxyacetone phosphate to form quinolinate. This chain is Quinolinate synthase, found in Thermodesulfovibrio yellowstonii (strain ATCC 51303 / DSM 11347 / YP87).